We begin with the raw amino-acid sequence, 217 residues long: Probable transaldolase (217 aa).

Lysine 83 functions as the Schiff-base intermediate with substrate in the catalytic mechanism.

This sequence belongs to the transaldolase family. Type 3B subfamily.

It localises to the cytoplasm. The catalysed reaction is D-sedoheptulose 7-phosphate + D-glyceraldehyde 3-phosphate = D-erythrose 4-phosphate + beta-D-fructose 6-phosphate. It participates in carbohydrate degradation; pentose phosphate pathway; D-glyceraldehyde 3-phosphate and beta-D-fructose 6-phosphate from D-ribose 5-phosphate and D-xylulose 5-phosphate (non-oxidative stage): step 2/3. Transaldolase is important for the balance of metabolites in the pentose-phosphate pathway. In Novosphingobium aromaticivorans (strain ATCC 700278 / DSM 12444 / CCUG 56034 / CIP 105152 / NBRC 16084 / F199), this protein is Probable transaldolase.